The following is a 493-amino-acid chain: Ketol-acid reductoisomerase (NADP(+)) (493 aa).

Residues 17–208 (LGKCRFMKRE…GGDRAGVLES (192 aa)) enclose the KARI N-terminal Rossmann domain. NADP(+) contacts are provided by residues 45-48 (CGAQ), R68, R76, S78, and 108-110 (DKQ). H132 is a catalytic residue. Residue G158 participates in NADP(+) binding. KARI C-terminal knotted domains lie at 209–353 (SFIA…SEQE) and 354–486 (YYDK…MTDM). Mg(2+) is bound by residues D217, E221, E389, and E393. Residue S414 participates in substrate binding.

It belongs to the ketol-acid reductoisomerase family. The cofactor is Mg(2+).

The enzyme catalyses (2R)-2,3-dihydroxy-3-methylbutanoate + NADP(+) = (2S)-2-acetolactate + NADPH + H(+). It carries out the reaction (2R,3R)-2,3-dihydroxy-3-methylpentanoate + NADP(+) = (S)-2-ethyl-2-hydroxy-3-oxobutanoate + NADPH + H(+). Its pathway is amino-acid biosynthesis; L-isoleucine biosynthesis; L-isoleucine from 2-oxobutanoate: step 2/4. The protein operates within amino-acid biosynthesis; L-valine biosynthesis; L-valine from pyruvate: step 2/4. Functionally, involved in the biosynthesis of branched-chain amino acids (BCAA). Catalyzes an alkyl-migration followed by a ketol-acid reduction of (S)-2-acetolactate (S2AL) to yield (R)-2,3-dihydroxy-isovalerate. In the isomerase reaction, S2AL is rearranged via a Mg-dependent methyl migration to produce 3-hydroxy-3-methyl-2-ketobutyrate (HMKB). In the reductase reaction, this 2-ketoacid undergoes a metal-dependent reduction by NADPH to yield (R)-2,3-dihydroxy-isovalerate. This is Ketol-acid reductoisomerase (NADP(+)) from Colwellia psychrerythraea (strain 34H / ATCC BAA-681) (Vibrio psychroerythus).